The following is a 393-amino-acid chain: NAD(P)H-quinone oxidoreductase subunit H, chloroplastic (393 aa).

It belongs to the complex I 49 kDa subunit family. NDH is composed of at least 16 different subunits, 5 of which are encoded in the nucleus.

It localises to the plastid. The protein resides in the chloroplast thylakoid membrane. It carries out the reaction a plastoquinone + NADH + (n+1) H(+)(in) = a plastoquinol + NAD(+) + n H(+)(out). The catalysed reaction is a plastoquinone + NADPH + (n+1) H(+)(in) = a plastoquinol + NADP(+) + n H(+)(out). Functionally, NDH shuttles electrons from NAD(P)H:plastoquinone, via FMN and iron-sulfur (Fe-S) centers, to quinones in the photosynthetic chain and possibly in a chloroplast respiratory chain. The immediate electron acceptor for the enzyme in this species is believed to be plastoquinone. Couples the redox reaction to proton translocation, and thus conserves the redox energy in a proton gradient. The protein is NAD(P)H-quinone oxidoreductase subunit H, chloroplastic of Populus alba (White poplar).